Here is a 408-residue protein sequence, read N- to C-terminus: Arginine biosynthesis bifunctional protein ArgJ (408 aa).

6 residues coordinate substrate: T158, K184, T195, E281, N403, and T408. The Nucleophile role is filled by T195.

The protein belongs to the ArgJ family. Heterotetramer of two alpha and two beta chains.

The protein localises to the cytoplasm. It carries out the reaction N(2)-acetyl-L-ornithine + L-glutamate = N-acetyl-L-glutamate + L-ornithine. The enzyme catalyses L-glutamate + acetyl-CoA = N-acetyl-L-glutamate + CoA + H(+). Its pathway is amino-acid biosynthesis; L-arginine biosynthesis; L-ornithine and N-acetyl-L-glutamate from L-glutamate and N(2)-acetyl-L-ornithine (cyclic): step 1/1. It participates in amino-acid biosynthesis; L-arginine biosynthesis; N(2)-acetyl-L-ornithine from L-glutamate: step 1/4. Its function is as follows. Catalyzes two activities which are involved in the cyclic version of arginine biosynthesis: the synthesis of N-acetylglutamate from glutamate and acetyl-CoA as the acetyl donor, and of ornithine by transacetylation between N(2)-acetylornithine and glutamate. The chain is Arginine biosynthesis bifunctional protein ArgJ from Shouchella clausii (strain KSM-K16) (Alkalihalobacillus clausii).